The following is a 166-amino-acid chain: Putative membrane protein 164 (166 aa).

Residues 1-4 (MYHP) are Intravirion-facing. The helical transmembrane segment at 5 to 25 (VVQVLIGLILVIILILGFYHL) threads the bilayer. The Virion surface segment spans residues 26–166 (KKKSCKTDTD…TIMGIARNIL (141 aa)).

It belongs to the asfivirus envelope protein p22 family.

The protein localises to the virion membrane. It localises to the host cell membrane. The chain is Putative membrane protein 164 from Ornithodoros (relapsing fever ticks).